Consider the following 516-residue polypeptide: Serine carboxypeptidase II-3 (516 aa).

A signal peptide spans 1–20 (MKCTVVALVLLVAVQCLVLG). The propeptide occupies 21–77 (AGPAAAAKARRTRQGDYLNRLRGSPSSRASWESLAAVEEQTTTKAAGRPAPVAAAVE). 3 cysteine pairs are disulfide-bonded: C143-C391, C300-C315, and C339-C359. N194 and N205 each carry an N-linked (GlcNAc...) asparagine glycan. Residue S236 is part of the active site. N-linked (GlcNAc...) asparagine glycosylation is present at N301. A propeptide spans 342-352 (EKLVTPPIAPS) (linker peptide). N380 carries N-linked (GlcNAc...) asparagine glycosylation. Residues D427 and H484 contribute to the active site.

This sequence belongs to the peptidase S10 family. In terms of assembly, carboxypeptidase II is a dimer, where each monomer is composed of two chains linked by a disulfide bond. In terms of processing, the linker peptide is endoproteolytically excised during enzyme maturation.

The catalysed reaction is Preferential release of a C-terminal arginine or lysine residue.. This chain is Serine carboxypeptidase II-3 (CXP;2-3), found in Hordeum vulgare (Barley).